A 360-amino-acid polypeptide reads, in one-letter code: Biotin synthase (360 aa).

Positions methionine 1–alanine 21 are disordered. The Radical SAM core domain occupies asparagine 62–arginine 289. Cysteine 77, cysteine 81, and cysteine 84 together coordinate [4Fe-4S] cluster. 4 residues coordinate [2Fe-2S] cluster: cysteine 121, cysteine 152, cysteine 212, and arginine 284.

Belongs to the radical SAM superfamily. Biotin synthase family. In terms of assembly, homodimer. The cofactor is [4Fe-4S] cluster. Requires [2Fe-2S] cluster as cofactor.

It carries out the reaction (4R,5S)-dethiobiotin + (sulfur carrier)-SH + 2 reduced [2Fe-2S]-[ferredoxin] + 2 S-adenosyl-L-methionine = (sulfur carrier)-H + biotin + 2 5'-deoxyadenosine + 2 L-methionine + 2 oxidized [2Fe-2S]-[ferredoxin]. It participates in cofactor biosynthesis; biotin biosynthesis; biotin from 7,8-diaminononanoate: step 2/2. Functionally, catalyzes the conversion of dethiobiotin (DTB) to biotin by the insertion of a sulfur atom into dethiobiotin via a radical-based mechanism. This Paraburkholderia xenovorans (strain LB400) protein is Biotin synthase.